The primary structure comprises 188 residues: Glandular kallikrein-3, submandibular (188 aa).

The Peptidase S1 domain maps to 1 to 185; that stretch reads NYHVLLGQNN…FTSWIKEVMK (185 aa). Residues Asn-10 and Asn-36 are each glycosylated (N-linked (GlcNAc...) asparagine). Asp-47 serves as the catalytic Charge relay system. 3 cysteine pairs are disulfide-bonded: Cys-79/Cys-146, Cys-111/Cys-125, and Cys-136/Cys-161. The active-site Charge relay system is Ser-140.

It belongs to the peptidase S1 family. Kallikrein subfamily.

The enzyme catalyses Preferential cleavage of Arg-|-Xaa bonds in small molecule substrates. Highly selective action to release kallidin (lysyl-bradykinin) from kininogen involves hydrolysis of Met-|-Xaa or Leu-|-Xaa.. Functionally, glandular kallikreins cleave Met-Lys and Arg-Ser bonds in kininogen to release Lys-bradykinin. This Rattus norvegicus (Rat) protein is Glandular kallikrein-3, submandibular (Klk3).